The chain runs to 728 residues: Dynamin-like protein 1 (728 aa).

The interval 1 to 119 (MKELFQKIWQ…ILQEKVQSID (119 aa)) is assembly domain, required for tetramerization. The 284-residue stretch at 159–442 (QNLEFNIAIT…LYAGEKSKIA (284 aa)) folds into the Dynamin-type G domain. A G1 motif region spans residues 169–176 (GVMNAGKS). GDP is bound at residue 171 to 177 (MNAGKSS). Residues 195-196 (ET) are G2 motif. The segment at 298–301 (DTPG) is G3 motif. Residues 358-361 (TKAD) are G4 motif. A GDP-binding site is contributed by Lys-359. A region of interest (G5 motif) is located at residue Glu-388. 400–402 (SAK) is a GDP binding site. A required for liposome binding but not for tetramerization region spans residues 470-695 (ENKQGVSEEN…LESLEKVLQS (226 aa)).

It belongs to the TRAFAC class dynamin-like GTPase superfamily. Dynamin/Fzo/YdjA family. In terms of assembly, forms a 2:2 heterotetramer with DLP1. DLP2 forms a central back-to-back dimer flanked on each side by a DLP1 subunit. In the crystal structures the 2 DLP1 subunits are in very different conformations.

The protein localises to the cytoplasm. Its subcellular location is the cytosol. The catalysed reaction is GTP + H2O = GDP + phosphate + H(+). Its function is as follows. The heterotetrameric DLP1(2)-DLP2(2) complex tethers liposomes and may mediate their fusion. Initial binding is probably mediated by DLP1, while DLP2 couples DLP1 subunits and increases the effective reach of the complex up to 45 nm. The role of the nucleotide is unknown. This subunit alone weakly binds to liposomes; GTP, GDP, GMPPCP and GMPPNP do not change heterotetramer binding. Tetramerization is required for GTPase activity, suggesting the GTPase domains (dynamin-type G) from DLP1 and DLP2 must dimerize to reconstitute the GTPase active site. In Campylobacter jejuni subsp. jejuni serotype O:23/36 (strain 81-176), this protein is Dynamin-like protein 1.